We begin with the raw amino-acid sequence, 171 residues long: Putative phosphoesterase BH1439 (171 aa).

H34 (proton donor) is an active-site residue. 2 consecutive short sequence motifs (HXTX) follow at residues 34–37 (HVTL) and 115–118 (HLTI). The Proton acceptor role is filled by H115.

This sequence belongs to the 2H phosphoesterase superfamily. YjcG family.

The polypeptide is Putative phosphoesterase BH1439 (Halalkalibacterium halodurans (strain ATCC BAA-125 / DSM 18197 / FERM 7344 / JCM 9153 / C-125) (Bacillus halodurans)).